The sequence spans 381 residues: Tafazzin (381 aa).

At 1–25 the chain is on the mitochondrial intermembrane side; sequence MSFRDVLERGDEFLEAYPRRSPLWR. An intramembrane segment occupies 26–47; that stretch reads FLSYSTSLLTFGVSKLLLFTCY. The Mitochondrial intermembrane segment spans residues 48–381; the sequence is NVKLNGFEKL…PEGKPKGKDD (334 aa). An HXXXXD motif motif is present at residues 77–82; the sequence is HMSMVD. A required for membrane insertion region spans residues 215–232; that stretch reads LEATKPPIVVPIFATGFE.

This sequence belongs to the taffazin family.

The protein localises to the mitochondrion outer membrane. It localises to the mitochondrion inner membrane. The catalysed reaction is 1'-[1,2-diacyl-sn-glycero-3-phospho],3'-[1-acyl-sn-glycero-3-phospho]-glycerol + a 1,2-diacyl-sn-glycero-3-phosphocholine = a cardiolipin + a 1-acyl-sn-glycero-3-phosphocholine. It carries out the reaction 1,2-di-(9Z,12Z-octadecadienoyl)-sn-glycero-3-phosphocholine + 1'-[1,2-di-(9Z,12Z-octadecadienoyl)-sn-glycero-3-phospho]-3'-[1-(9Z,12Z-octadecadienoyl)-sn-glycero-3-phospho]-glycerol = 1-(9Z,12Z)-octadecadienoyl-sn-glycero-3-phosphocholine + 1',3'-bis-[1,2-di-(9Z,12Z-octadecadienoyl)-sn-glycero-3-phospho]-glycerol. It catalyses the reaction 1'-[1,2-di-(9Z-octadecenoyl)-sn-glycero-3-phospho]-3'-[1-(9Z-octadecenoyl)-2-hexadecanoyl-sn-glycero-3-phospho]-glycerol + 1-hexadecanoyl-sn-glycero-3-phosphocholine = 1'-[1,2-di-(9Z-octadecenoyl)-sn-glycero-3-phospho]-3'-[1-(9Z-octadecenoyl)-sn-glycero-3-phospho]-glycerol + 1,2-dihexadecanoyl-sn-glycero-3-phosphocholine. The enzyme catalyses 1'-[1,2-di-(9Z-octadecenoyl)-sn-glycero-3-phospho]-3'-[1-(9Z-octadecenoyl)-2-(9Z-hexadecenoyl)-sn-glycero-3-phospho]-glycerol + 1-(9Z-hexadecenoyl)-sn-glycero-3-phosphocholine = 1,2-di-(9Z-hexadecenoyl)-sn-glycero-3-phosphocholine + 1'-[1,2-di-(9Z-octadecenoyl)-sn-glycero-3-phospho]-3'-[1-(9Z-octadecenoyl)-sn-glycero-3-phospho]-glycerol. The catalysed reaction is 1',3'-bis[1,2-di-(9Z-octadecenoyl)-sn-glycero-3-phospho]-glycerol + 1-(9Z-octadecenoyl)-sn-glycero-3-phosphocholine = 1'-[1,2-di-(9Z-octadecenoyl)-sn-glycero-3-phospho]-3'-[1-(9Z-octadecenoyl)-sn-glycero-3-phospho]-glycerol + 1,2-di-(9Z-octadecenoyl)-sn-glycero-3-phosphocholine. It carries out the reaction 1'-[1,2-di-(9Z-octadecenoyl)-sn-glycero-3-phospho]-3'-[1-(9Z-octadecenoyl)-2-(9Z,12Z-octadecadienoyl)-sn-glycero-3-phospho]-glycerol + 1-(9Z,12Z)-octadecadienoyl-sn-glycero-3-phosphocholine = 1,2-di-(9Z,12Z-octadecadienoyl)-sn-glycero-3-phosphocholine + 1'-[1,2-di-(9Z-octadecenoyl)-sn-glycero-3-phospho]-3'-[1-(9Z-octadecenoyl)-sn-glycero-3-phospho]-glycerol. It catalyses the reaction 1'-[1,2-di-(9Z-octadecenoyl)-sn-glycero-3-phospho]-3'-[1-(9Z-octadecenoyl)-2-(9Z-hexadecenoyl)-sn-glycero-3-phospho]-glycerol + 1-hexadecanoyl-sn-glycero-3-phosphocholine = 1-hexadecanoyl-2-(9Z-hexadecenoyl)-sn-glycero-3-phosphocholine + 1'-[1,2-di-(9Z-octadecenoyl)-sn-glycero-3-phospho]-3'-[1-(9Z-octadecenoyl)-sn-glycero-3-phospho]-glycerol. The enzyme catalyses 1'-[1,2-di-(9Z-octadecenoyl)-sn-glycero-3-phospho]-3'-[1-(9Z-octadecenoyl)-2-hexadecanoyl-sn-glycero-3-phospho]-glycerol + 1-(9Z-hexadecenoyl)-sn-glycero-3-phosphocholine = 1-(9Z-hexadecenoyl)-2-hexadecanoyl-sn-glycero-3-phosphocholine + 1'-[1,2-di-(9Z-octadecenoyl)-sn-glycero-3-phospho]-3'-[1-(9Z-octadecenoyl)-sn-glycero-3-phospho]-glycerol. The catalysed reaction is 2 1'-[1,2-diacyl-sn-glycero-3-phospho],3'-[1-acyl-sn-glycero-3-phospho]-glycerol = 1',3'-bis-[1-acyl-sn-glycero-3-phospho]-glycerol + a cardiolipin. It carries out the reaction 2 1'-[1,2-di-(9Z-octadecenoyl)-sn-glycero-3-phospho]-3'-[1-(9Z-octadecenoyl)-sn-glycero-3-phospho]-glycerol = 1',3'-bis-[1-(9Z-octadecenoyl)-sn-glycero-3-phospho]-glycerol + 1',3'-bis[1,2-di-(9Z-octadecenoyl)-sn-glycero-3-phospho]-glycerol. It catalyses the reaction 1,2-di-(9Z-hexadecenoyl)-sn-glycero-3-phosphocholine + 1-hexadecanoyl-sn-glycero-3-phosphocholine = 1-hexadecanoyl-2-(9Z-hexadecenoyl)-sn-glycero-3-phosphocholine + 1-(9Z-hexadecenoyl)-sn-glycero-3-phosphocholine. The enzyme catalyses 1'-[1,2-di-(9Z,12Z-octadecadienoyl)-sn-glycero-3-phospho]-3'-[1-(9Z,12Z-octadecadienoyl)-sn-glycero-3-phospho]-glycerol + 1,2-di-(9Z-octadecenoyl)-sn-glycero-3-phosphocholine = 1'-[1,2-di-(9Z,12Z-octadecadienoyl)-sn-glycero-3-phospho]-3'-[1-(9Z,12Z-octadecadienoyl)-2-(9Z-octadecenoyl)-sn-glycero-3-phospho]-glycerol + 1-(9Z-octadecenoyl)-sn-glycero-3-phosphocholine. The protein operates within phospholipid metabolism. Its function is as follows. Acyltransferase required to remodel newly synthesized phospholipid cardiolipin (1',3'-bis-[1,2-diacyl-sn-glycero-3-phospho]-glycerol or CL), a key component of the mitochondrial inner membrane, with tissue specific acyl chains necessary for adequate mitochondrial function. Its role in cellular physiology is to improve mitochondrial performance. CL is critical for the coassembly of lipids and proteins in mitochondrial membranes, for instance, remodeling of the acyl groups of CL in the mitochondrial inner membrane affects the assembly and stability of respiratory chain complex IV and its supercomplex forms. Catalyzes the transacylation between phospholipids and lysophospholipids, with the highest rate being between phosphatidylcholine (1,2-diacyl-sn-glycero-3-phosphocholine or PC) and CL. Catalyzes both 1-acyl-sn-glycero-3-phosphocholine (lysophosphatidylcholine or LPC) reacylation and PC-CL transacylation, that means, it exchanges acyl groups between CL and PC by a combination of forward and reverse transacylations. Also catalyzes transacylations between other phospholipids such as phosphatidylethanolamine (1,2-diacyl-sn-glycero-3-phosphoethanolamine or PE) and CL, between PC and PE, and between PC and phosphatidate (1,2-diacyl-sn-glycero-3-phosphate or PA), although at lower rate. Not regiospecific, it transfers acyl groups into any of the sn-1 and sn-2 positions of the monolysocardiolipin (MLCL), which is an important prerequisite for uniformity and symmetry in CL acyl distribution. Cannot transacylate dilysocardiolipin (DLCL), thus, the role of MLCL is limited to that of an acyl acceptor. CoA-independent, it can reshuffle molecular species within a single phospholipid class. Redistributes fatty acids between MLCL, CL, and other lipids, which prolongs the half-life of CL. Its action is completely reversible, which allows for cyclic changes, such as fission and fusion or bending and flattening of the membrane. Hence, by contributing to the flexibility of the lipid composition, it plays an important role in the dynamics of mitochondria membranes. Essential for the final stage of spermatogenesis, spermatid individualization. Required for the initiation of mitophagy. The chain is Tafazzin (TAZ1) from Saccharomyces cerevisiae (strain ATCC 204508 / S288c) (Baker's yeast).